The sequence spans 374 residues: MNALFIIIFMIVVGAIIGGITNVIAIRMLFHPFKPYYIFKFRVPFTPGLIPKRREEIATKIGQVIEEHLLTETLINEKLKSEQSQQAIESMIQQQLQKLTKDQLSIKQITSQIDIDLEQVLQTNGNQYIESQLNNYYTKHQNQTIASLLPNQLVTFLDQHVDNATDLLCDRARNYLSSAKGTQDINDMLDTFFNEKGKLFGMLQMFMTKESIADRIQQELIRLTSHPKARTIVTSLITNEYQTFKDKPLNELLDASQFNEIAENLSVYVTTYASKQANKPVVTLMPQFVDYLEGQLSSKLANLIIEKLSIHLSTIMKKVDLRGLIEEQINTFDLDYIEKLIIEIANKELKLIMSLGFILGGIIGFFQGLVAIFV.

2 helical membrane-spanning segments follow: residues 4–24 (LFIIIFMIVVGAIIGGITNVI) and 354–374 (SLGFILGGIIGFFQGLVAIFV).

This sequence belongs to the UPF0754 family.

It localises to the cell membrane. This Staphylococcus aureus (strain MSSA476) protein is UPF0754 membrane protein SAS1767.